A 420-amino-acid polypeptide reads, in one-letter code: 3-isopropylmalate dehydratase large subunit (420 aa).

Cys300, Cys360, and Cys363 together coordinate [4Fe-4S] cluster.

The protein belongs to the aconitase/IPM isomerase family. LeuC type 2 subfamily. As to quaternary structure, heterodimer of LeuC and LeuD. [4Fe-4S] cluster serves as cofactor.

It catalyses the reaction (2R,3S)-3-isopropylmalate = (2S)-2-isopropylmalate. It participates in amino-acid biosynthesis; L-leucine biosynthesis; L-leucine from 3-methyl-2-oxobutanoate: step 2/4. Its function is as follows. Catalyzes the isomerization between 2-isopropylmalate and 3-isopropylmalate, via the formation of 2-isopropylmaleate. The protein is 3-isopropylmalate dehydratase large subunit of Heliobacterium modesticaldum (strain ATCC 51547 / Ice1).